The chain runs to 808 residues: Protein tortoise (808 aa).

Positions 43-78 (KDRKELYSLNNDSIKKKLNQLKDETNQLLKERGEEL) form a coiled coil. The interval 152 to 171 (LTSGGANKKKSPFLEDNNNK) is disordered. The stretch at 694 to 733 (EDLDFQIEELELMIKNKKILEREIKAHNEKISKIIKDSRD) forms a coiled coil.

Its subcellular location is the mitochondrion. Its function is as follows. Required for efficient chemotaxis. This is Protein tortoise (torA) from Dictyostelium discoideum (Social amoeba).